The sequence spans 198 residues: Outer-membrane lipoprotein carrier protein (198 aa).

The signal sequence occupies residues 1–17 (MKKILLSLCFLSSVAFA).

This sequence belongs to the LolA family. Monomer.

Its subcellular location is the periplasm. Participates in the translocation of lipoproteins from the inner membrane to the outer membrane. Only forms a complex with a lipoprotein if the residue after the N-terminal Cys is not an aspartate (The Asp acts as a targeting signal to indicate that the lipoprotein should stay in the inner membrane). In Aliivibrio salmonicida (strain LFI1238) (Vibrio salmonicida (strain LFI1238)), this protein is Outer-membrane lipoprotein carrier protein.